Here is a 240-residue protein sequence, read N- to C-terminus: Prolactin-8A6 (240 aa).

The signal sequence occupies residues 1 to 30 (MALLLSQPHFSGPLLLLVVSNLLLWEKAAS). Disulfide bonds link Cys-34-Cys-41, Cys-101-Cys-216, and Cys-233-Cys-240. The N-linked (GlcNAc...) asparagine glycan is linked to Asn-212.

It belongs to the somatotropin/prolactin family. As to expression, expressed specifically in the spongiotrophoblast and trophoblast giant cells from the junctional zone of the chorioallantoic placenta.

It localises to the secreted. The protein is Prolactin-8A6 (Prl8a6) of Mus musculus (Mouse).